The sequence spans 368 residues: MNIAIIYGGKSSEHEVSLQSASSIIRTIDKKHKLHLIGISKNGAWYLHGDEERERIIKNEKAVLKIKKDEAKRVTVIPGGGAKKGLKAGDEFLPTDAVFAVLHGRFGEDGTIQGLFEMADLPYVGGDVMSTSISMDKEKTKMIWDYSGLPIVPYIAIKRQDWDDPEKKKAILARAEKDLEYPLFIKPCRAGSSVGAGMVKNRNELLEQAEESFLWDNKILVEACIEAREVECSVTGNTKTVAYIPGEIIPTHKFYDYEAKYTDPNGAELKIPADLNETQRKTIRETAIKAYEALDLSGLSRVDFFIDKRTGKIYLNEVNTIPGFTAISMFPKMCGASGLPYNELIMHLIELAIDRFKTDRKLKTCRQS.

In terms of domain architecture, ATP-grasp spans 141-350 (KMIWDYSGLP…YNELIMHLIE (210 aa)). ATP is bound at residue 176 to 231 (EKDLEYPLFIKPCRAGSSVGAGMVKNRNELLEQAEESFLWDNKILVEACIEAREVE). Mg(2+)-binding residues include D303, E317, and N319.

The protein belongs to the D-alanine--D-alanine ligase family. Mg(2+) is required as a cofactor. Mn(2+) serves as cofactor.

The protein resides in the cytoplasm. It carries out the reaction 2 D-alanine + ATP = D-alanyl-D-alanine + ADP + phosphate + H(+). It functions in the pathway cell wall biogenesis; peptidoglycan biosynthesis. In terms of biological role, cell wall formation. The protein is D-alanine--D-alanine ligase of Treponema denticola (strain ATCC 35405 / DSM 14222 / CIP 103919 / JCM 8153 / KCTC 15104).